The sequence spans 462 residues: Transcription factor-like protein EUC1 (462 aa).

Disordered regions lie at residues 11–43 and 66–97; these read GFGGYGSLDDDDSDRDSERRNHDLGQRTITTSP and RPTDAAQPPIVSTSTSASATEPTNRIGPGRIK. A phosphoserine mark is found at S17 and S23. Positions 26–35 are enriched in basic and acidic residues; sequence DSERRNHDLG. Positions 81 to 140 are homodimerization region; sequence SASATEPTNRIGPGRIKETPETNFNAFLIAQLTRMEEQNANLKEEISLMKKEQELFFLEN. Positions 105–135 form a coiled coil; sequence NAFLIAQLTRMEEQNANLKEEISLMKKEQEL. Disordered stretches follow at residues 190–214 and 226–289; these read QEAARVGNPSTSTQAHQSQSRSTNW and GDPR…RNRR. The span at 197–214 shows a compositional bias: polar residues; sequence NPSTSTQAHQSQSRSTNW. K231 participates in a covalent cross-link: Glycyl lysine isopeptide (Lys-Gly) (interchain with G-Cter in SUMO). A phosphoserine mark is found at S237 and S249. A compositionally biased stretch (acidic residues) spans 240-251; it reads ENGEYDGNESDE. Positions 252-282 are enriched in polar residues; sequence NATTRNLPLNNPDSVSNADDSNNQLDGTGNE. T254 carries the phosphothreonine modification. Positions 296 to 385 are GCR1 DNA-binding region; sequence YKLNRAIQNV…QAIKVVENIR (90 aa). Positions 441 to 455 are enriched in polar residues; it reads SLQQPHSIPNSSTGT. A disordered region spans residues 441 to 462; sequence SLQQPHSIPNSSTGTPEHDQDT.

In terms of assembly, homodimer. Interacts with SLX5. Sumoylated at Lys-231 and subsequently ubiquitinated by the SUMO-targeted ubiquitin ligase (STUbL) complex SLX5/SLX8.

It localises to the chromosome. Its function is as follows. Transcription factor-like protein that binds to specific DNA motifs called ub-HS-motif associated with several locations where proteins other than histone H2B are ubiquitinated (ub-hotspots). Ubiquitination at these sites depends on the SUMO-targeted ubiquitin ligase (STUbL) complex SLX5/SLX8 and protein turnover on the CDC48 segregase. UBC9, SIZ1, or SIZ2 sumoylate DNA-bound EUC1 to stabilize its DNA-binding. Sumoylated EUC1 acts a cofactor required for the recruitment of the SLX5/SLX8 STUbL complex via specific contacts between EUC1 and SLX5, as well as an additional SUMO-mediated interaction. SLX5/SLX8 then ubiquitinates EUC1 and presumably other targets at ub-hotspots, and the CDC48/UFD1/NPL4 complex, together with UBX4 and UBX5, removes Lys-48-linked ubiquitinated proteins from chromatin. Ubiquitinated proteins could be either degraded by the proteasome or recycled by deubiquitination. EUC1 itself does not seem to underlie extensive turnover, as it is a very stable protein. EUC1 is able to act as a transcription factor, but its function at ub-hotspots does not seem to depend on this ability. EUC1-mediated ub-hotspots are crucial during stress responses when gene expression control is impaired. The chain is Transcription factor-like protein EUC1 from Saccharomyces cerevisiae (strain ATCC 204508 / S288c) (Baker's yeast).